Consider the following 360-residue polypeptide: MFVDSVEIIIASGKGGPGMVSFRREKFVIKGGPDGGDGGDGGDVYFEVDNNTDTLASFRGTKHHKAKNGAPGGTRNCAGKKGEDKIIVVPPGTQVFADDKLWLDLITPKERVLALKGGKGGLGNAHFKSATKQQPTYAQKGLEGVEKCVRLELKLIADIGLVGFPNAGKSTLISTISNAKPKIANYEFTTLVPNLGVVSVDEKSGFLMADIPGIIEGASEGKGLGISFLKHIERTKVLAFVLDASRLDLGIKEQYQRLRLELEKFSPALANKPFGVLLNKCDVVENIDEMAKDFCAFLNLEVQKLEAFDLEPYLGFLHPHLTSDFENDPNEKSALFVLPLSAVSALNTHALKFVLLKALP.

The region spanning 1 to 156 is the Obg domain; it reads MFVDSVEIII…KCVRLELKLI (156 aa). Positions 157–360 constitute an OBG-type G domain; that stretch reads ADIGLVGFPN…LKFVLLKALP (204 aa). Residues 163-170, 188-192, 210-213, 279-282, and 341-343 each bind GTP; these read GFPNAGKS, FTTLV, DIPG, NKCD, and SAV. Ser-170 and Thr-190 together coordinate Mg(2+).

Belongs to the TRAFAC class OBG-HflX-like GTPase superfamily. OBG GTPase family. Monomer. Mg(2+) serves as cofactor.

It is found in the cytoplasm. An essential GTPase which binds GTP, GDP and possibly (p)ppGpp with moderate affinity, with high nucleotide exchange rates and a fairly low GTP hydrolysis rate. Plays a role in control of the cell cycle, stress response, ribosome biogenesis and in those bacteria that undergo differentiation, in morphogenesis control. The polypeptide is GTPase Obg (Helicobacter pylori (strain G27)).